The following is a 237-amino-acid chain: Leucyl/phenylalanyl-tRNA--protein transferase (237 aa).

The protein belongs to the L/F-transferase family.

The protein localises to the cytoplasm. It carries out the reaction N-terminal L-lysyl-[protein] + L-leucyl-tRNA(Leu) = N-terminal L-leucyl-L-lysyl-[protein] + tRNA(Leu) + H(+). The catalysed reaction is N-terminal L-arginyl-[protein] + L-leucyl-tRNA(Leu) = N-terminal L-leucyl-L-arginyl-[protein] + tRNA(Leu) + H(+). The enzyme catalyses L-phenylalanyl-tRNA(Phe) + an N-terminal L-alpha-aminoacyl-[protein] = an N-terminal L-phenylalanyl-L-alpha-aminoacyl-[protein] + tRNA(Phe). Its function is as follows. Functions in the N-end rule pathway of protein degradation where it conjugates Leu, Phe and, less efficiently, Met from aminoacyl-tRNAs to the N-termini of proteins containing an N-terminal arginine or lysine. This chain is Leucyl/phenylalanyl-tRNA--protein transferase, found in Shewanella baltica (strain OS155 / ATCC BAA-1091).